A 979-amino-acid chain; its full sequence is MSPLKIHGPIRIRSMQTGITKWKEGSFEIVEKENKVSLVVHYNTGGIPRIFQLSHNIKNVVLRPSGAKQSRLMLTLQDNSFLSIDKVPSKDAEEMRLFLDAVHQNRLPAAMKPSQGSGSFGAILGSRTSQKETSRQLSYSDNQASAKRGSLETKDDIPFRKVLGNPGRGSIKTVAGSGIARTIPSLTSTSTPLRSGLLENRTEKRKRMISTGSELNEDYPKENDSSSNNKAMTDPSRKYLTSSREKQLSLKQSEENRTSGLLPLQSSSFYGSRAGSKEHSSGGTNLDRTNVSSQTPSAKRSLGFLPQPVPLSVKKLRCNQDYTGWNKPRVPLSSHQQQQLQGFSNLGNTCYMNAILQSLFSLQSFANDLLKQGIPWKKIPLNALIRRFAHLLVKKDICNSETKKDLLKKVKNAISATAERFSGYMQNDAHEFLSQCLDQLKEDMEKLNKTWKTEPVSGEENSPDISATRAYTCPVITNLEFEVQHSIICKACGEIIPKREQFNDLSIDLPRRKKPLPPRSIQDSLDLFFRAEELEYSCEKCGGKCALVRHKFNRLPRVLILHLKRYSFNVALSLNNKIGQQVIIPRYLTLSSHCTENTKPPFTLGWSAHMAISRPLKASQMVNSCITSPSTPSKKFTFKSKSSLALCLDSDSEDELKRSVALSQRLCEMLGNEQQQEDLEKDSKLCPIEPDKSELENSGFDRMSEEELLAAVLEISKRDASPSLSHEDDDKPTSSPDTGFAEDDIQEMPENPDTMETEKPKTITELDPASFTEITKDCDENKENKTPEGSQGEVDWLQQYDMEREREEQELQQALAQSLQEQEAWEQKEDDDLKRATELSLQEFNNSFVDALGSDEDSGNEDVFDMEYTEAEAEELKRNAETGNLPHSYRLISVVSHIGSTSSSGHYISDVYDIKKQAWFTYNDLEVSKIQEAAVQSDRDRSGYIFFYMHKEIFDELLETEKNSQSLSTEVGKTTRQAL.

The short motif at 32-34 (KEN) is the KEN box 1 element. 2 consecutive short sequence motifs (D-box) follow at residues 71–79 (RLMLTLQDN) and 96–105 (RLFLDAVHQN). A disordered region spans residues 110–153 (AMKPSQGSGSFGAILGSRTSQKETSRQLSYSDNQASAKRGSLET). Residue Ser114 is modified to Phosphoserine. Over residues 135 to 145 (RQLSYSDNQAS) the composition is skewed to polar residues. The D-box 3 motif lies at 160–168 (RKVLGNPGR). Ser170 bears the Phosphoserine mark. Over residues 183–198 (IPSLTSTSTPLRSGLL) the composition is skewed to low complexity. The disordered stretch occupies residues 183 to 304 (IPSLTSTSTP…TPSAKRSLGF (122 aa)). Residue Ser210 is modified to Phosphoserine. The KEN box 2 motif lies at 221–223 (KEN). Residues 243-257 (SREKQLSLKQSEENR) are compositionally biased toward basic and acidic residues. A compositionally biased stretch (polar residues) spans 281 to 298 (SGGTNLDRTNVSSQTPSA). The region spanning 341 to 951 (QGFSNLGNTC…SGYIFFYMHK (611 aa)) is the USP domain. Residue Cys350 is the Nucleophile of the active site. Phosphoserine; by CDK2 is present on Ser628. Phosphoserine is present on residues Ser650 and Ser652. Disordered regions lie at residues 673 to 701 (EQQQ…SGFD) and 719 to 795 (DASP…GEVD). 2 stretches are compositionally biased toward basic and acidic residues: residues 681–695 (KDSK…KSEL) and 719–732 (DASP…DDKP). One can recognise a UIM 1 domain in the interval 704 to 723 (SEEELLAAVLEISKRDASPS). Residue Ser770 is modified to Phosphoserine. The span at 774 to 786 (ITKDCDENKENKT) shows a compositional bias: basic and acidic residues. Residues 782–784 (KEN) carry the KEN box 3 motif. UIM domains lie at 806–825 (REEQ…QEAW) and 828–847 (KEDD…FNNS). His906 acts as the Proton acceptor in catalysis.

This sequence belongs to the peptidase C19 family. As to quaternary structure, interacts with FZR1/CDH1. Interacts with CDT1. In terms of processing, polyubiquitinated via 'Lys-11'-linked ubiquitin by the APC(CDH1) complex during late mitosis, leading to its degradation. Able to mediate auto-deubiquitination. Post-translationally, phosphorylated at Ser-628 by CDK2 during G1/S phase but not during mitosis; phosphorylation at Ser-628 is required for deubiquitinase activity. Also polyubiquitinated during early G1 phase, without leading to degradation. Phosphorylated at Ser-114 by ATM following DNA damage, which in turn increases its deubiquitination activity towards BLM. As to expression, expressed in brain and prostate.

The protein localises to the nucleus. It is found in the chromosome. It carries out the reaction Thiol-dependent hydrolysis of ester, thioester, amide, peptide and isopeptide bonds formed by the C-terminal Gly of ubiquitin (a 76-residue protein attached to proteins as an intracellular targeting signal).. Its function is as follows. Deubiquitinase that plays a role in different processes including cell cycle regulation, DNA replication or DNA damage response. Antagonizes the anaphase-promoting complex (APC/C) during G1/S transition by mediating deubiquitination of cyclin-A (CCNA1 and CCNA2), thereby promoting S phase entry. Specifically mediates deubiquitination of 'Lys-11'-linked polyubiquitin chains, a specific ubiquitin-linkage type mediated by the APC/C complex. Phosphorylation at Ser-628 during G1/S phase maximizes the deubiquitinase activity, leading to prevent degradation of cyclin-A (CCNA1 and CCNA2). Plays an important role in the regulation of DNA replication by stabilizing the licensing factor CDT1. Also plays an essential role beyond S-phase entry to promote the efficiency and fidelity of replication by deubiquitinating checkpoint kinase 1/CHK1, promoting its stability. Sustains the DNA damage response (DDR) by deubiquitinating and stabilizing the ATP-dependent DNA helicase BLM. Mechanistically, DNA double-strand breaks (DSB) promotes ATM-mediated phosphorylation of USP37 and enhances the binding between USP37 and BLM. Promotes cell migration by deubiquitinating and stabilizing the epithelial-mesenchymal transition (EMT)-inducing transcription factor SNAI. Plays a role in the regulation of mitotic spindle assembly and mitotic progression by associating with chromatin-associated WAPL and stabilizing it through deubiquitination. This chain is Ubiquitin carboxyl-terminal hydrolase 37 (USP37), found in Homo sapiens (Human).